The chain runs to 1101 residues: Rho guanine nucleotide exchange factor gef2 (1101 aa).

A disordered region spans residues 203-222 (EDSRKKTSSPSPSFASSKDA). Low complexity predominate over residues 210 to 219 (SSPSPSFASS). Residues 230-428 (KKKSLLIEMM…KNIAEMPTVD (199 aa)) form the DH domain. 2 positions are modified to phosphoserine: Ser-736 and Ser-977.

It localises to the cytoplasm. The protein localises to the cytoskeleton. Its subcellular location is the microtubule organizing center. It is found in the spindle pole body. Functionally, has a role in the control of cell polarity and cytokinesis. Involved in bipolar growth and septum formation. The polypeptide is Rho guanine nucleotide exchange factor gef2 (gef2) (Schizosaccharomyces pombe (strain 972 / ATCC 24843) (Fission yeast)).